Here is a 441-residue protein sequence, read N- to C-terminus: 23S rRNA (uracil(1939)-C(5))-methyltransferase RlmD (441 aa).

In terms of domain architecture, TRAM spans 1 to 56; sequence MSIDSLDMEARGVGRLLNEDGTPGKVIFVEGALPGETVSYRSFRRKPSYEQAHLVE. [4Fe-4S] cluster contacts are provided by Cys-69, Cys-75, Cys-78, and Cys-157. 6 residues coordinate S-adenosyl-L-methionine: Gln-265, Phe-294, Asn-299, Glu-315, Asn-343, and Asp-364. The active-site Nucleophile is the Cys-397.

It belongs to the class I-like SAM-binding methyltransferase superfamily. RNA M5U methyltransferase family. RlmD subfamily.

It carries out the reaction uridine(1939) in 23S rRNA + S-adenosyl-L-methionine = 5-methyluridine(1939) in 23S rRNA + S-adenosyl-L-homocysteine + H(+). Catalyzes the formation of 5-methyl-uridine at position 1939 (m5U1939) in 23S rRNA. The protein is 23S rRNA (uracil(1939)-C(5))-methyltransferase RlmD of Cupriavidus necator (strain ATCC 17699 / DSM 428 / KCTC 22496 / NCIMB 10442 / H16 / Stanier 337) (Ralstonia eutropha).